We begin with the raw amino-acid sequence, 682 residues long: Amphiphysin (682 aa).

2 coiled-coil regions span residues 10 to 84 (AKNV…LHEV) and 144 to 191 (DYDS…QEEL). A BAR domain is found at 24–240 (VLQKLGKADE…MTKLGDQHAD (217 aa)). Disordered regions lie at residues 244 to 310 (TIQG…PKLT), 446 to 470 (ILAEPDEPTEQAAESIEAGDKETTG), 501 to 530 (GAVRTEQEAAAEGDKPQGEEKDVDVSQEKV), and 561 to 606 (AAAE…ASDM). The span at 261 to 274 (PSPPEEVSPLPSPT) shows a compositional bias: pro residues. The span at 503 to 527 (VRTEQEAAAEGDKPQGEEKDVDVSQ) shows a compositional bias: basic and acidic residues. Over residues 567–596 (TQGTDSETSQIGSEQKATEEIQTTPSQDQP) the composition is skewed to polar residues. The region spanning 609 to 682 (GFLFKVEVLH…FPENFTRHLE (74 aa)) is the SH3 domain.

As to quaternary structure, heterodimer with BIN1. Binds SH3GLB1. In terms of tissue distribution, is abundant in the forebrain and cerebellum. It is also found in the adrenal gland, anterior and posterior pituitary.

It localises to the cytoplasmic vesicle. The protein resides in the secretory vesicle. Its subcellular location is the synaptic vesicle membrane. It is found in the cytoplasm. The protein localises to the cytoskeleton. May participate in mechanisms of regulated exocytosis in synapses and certain endocrine cell types. May control the properties of the membrane associated cytoskeleton. This chain is Amphiphysin (AMPH), found in Gallus gallus (Chicken).